A 105-amino-acid polypeptide reads, in one-letter code: Urease subunit beta (105 aa).

This sequence belongs to the urease beta subunit family. Heterotrimer of UreA (gamma), UreB (beta) and UreC (alpha) subunits. Three heterotrimers associate to form the active enzyme.

Its subcellular location is the cytoplasm. It carries out the reaction urea + 2 H2O + H(+) = hydrogencarbonate + 2 NH4(+). It participates in nitrogen metabolism; urea degradation; CO(2) and NH(3) from urea (urease route): step 1/1. The chain is Urease subunit beta from Prochlorococcus marinus (strain MIT 9313).